The chain runs to 147 residues: Large ribosomal subunit protein uL15 (147 aa).

Positions 16–63 (SSRARVGRGIGSGLGKTAGRGHKGSFARKGGGKIKPGFEGGQTPMQRR) are disordered. Residues 23–33 (RGIGSGLGKTA) are compositionally biased toward gly residues. The span at 34 to 47 (GRGHKGSFARKGGG) shows a compositional bias: basic residues.

It belongs to the universal ribosomal protein uL15 family. In terms of assembly, part of the 50S ribosomal subunit.

Its function is as follows. Binds to the 23S rRNA. The polypeptide is Large ribosomal subunit protein uL15 (Xylella fastidiosa (strain Temecula1 / ATCC 700964)).